A 499-amino-acid chain; its full sequence is Endosomal/lysosomal proton channel TMEM175 (499 aa).

The Cytoplasmic portion of the chain corresponds to 1–30 (MSRLQTEEQAVDSEGDSSLHRRNEEGTQSS). Residues 1-30 (MSRLQTEEQAVDSEGDSSLHRRNEEGTQSS) are disordered. The residue at position 6 (T6) is a Phosphothreonine. The chain crosses the membrane as a helical span at residues 31-53 (HRMLGFSDALLSIIATVMILPVT). The RxxxFSD motif 1 signature appears at 32-38 (RMLGFSD). The Lumenal segment spans residues 54–74 (HTEISPEQQFDKSIQKLLATR). A short helix H1-1 region spans residues 55 to 60 (TEISPE). The tract at residues 62–68 (QFDKSIQ) is short helix H2-1. Residues 75–97 (IAVYLMTFLIVTVAWTAHTRLFQ) form a helical membrane-spanning segment. The Cytoplasmic segment spans residues 98 to 103 (VVGKID). A helical membrane pass occupies residues 104 to 125 (DTLALLNLACMMTITLLPYTFS). The Lumenal portion of the chain corresponds to 126–135 (LMVTFPDVPL). Residues 136–157 (GIFLFCVCVIAIGSVQAMIVGY) traverse the membrane as a helical segment. Residues 158–181 (AFHFPHLLNPQIQCSTHRDLSRRH) are Cytoplasmic-facing. Residues 182-202 (ILHLVLRGPALCFVAAVFSLF) traverse the membrane as a helical segment. Residues 203 to 207 (FFPLS) are Lumenal-facing. Residues 208–227 (YLLMVTVIFLPHISKATTWC) form a helical membrane-spanning segment. The Cytoplasmic segment spans residues 228-254 (KDKLMGQRESPAHDMEPFSIDLHAPLS). Residues 255-279 (KERVEAFSDGVYAIVATLLILDICE) form a helical membrane-spanning segment. Residues 257–263 (RVEAFSD) carry the RxxxFSD motif 2 motif. Residues 280 to 306 (DNVPDPKDVQEKFSGSLVAALGAYGPQ) are Lumenal-facing. Residues 285-293 (PKDVQEKFS) form a short helix H1-2 region. The segment at 295–301 (SLVAALG) is short helix H2-2. A helical membrane pass occupies residues 307–329 (FLAYFGSFATVGLLWFAHHSLFL). Residues 330–335 (HVRKAT) lie on the Cytoplasmic side of the membrane. Residues 336–357 (QTMGLLNILSLAFVGGLPLAYQ) form a helical membrane-spanning segment. The Lumenal portion of the chain corresponds to 358–372 (QTSAFARQPHDELER). A helical transmembrane segment spans residues 373-393 (VRVSCAIIFFASIFQFAIWTT). Over 394-413 (ALLHQTETLQPAVQFGGQEH) the chain is Cytoplasmic. Residues 414 to 437 (AFMFAKLALYPCASLLAFAATCLL) traverse the membrane as a helical segment. Topologically, residues 438–439 (SR) are lumenal. A helical membrane pass occupies residues 440–466 (FSTAIFHLMQISVPFAFLLLRLLVRLA). The Cytoplasmic portion of the chain corresponds to 467–499 (LAGLQVLRGLWPHHPQQDQSEPEAQSQLLPDPC).

Belongs to the TMEM175 family. As to quaternary structure, homodimer. Interacts with AKT (AKT1, AKT2 or AKT3); leading to formation of the lysoK(GF) complex, which activates the channel. Interacts with LAMP1; inhibiting the proton channel activity of TMEM175. Interacts with LAMP2; inhibiting the proton channel activity of TMEM175.

It localises to the endosome membrane. The protein resides in the lysosome membrane. It catalyses the reaction H(+)(in) = H(+)(out). The enzyme catalyses K(+)(in) = K(+)(out). Active at low pH (under pH 4.6): proton channel activity is activated by luminal side protons. Polyunsaturated fatty acids, such as arachidonic acid, also activate the channel activity. Proton channel activity is directly inhibited by LAMP1 or LAMP2, facilitating lysosomal acidification. Channel activity is activated following interaction with AKT (AKT1, AKT2 or AKT3): interaction promotes activation from closed to an open state. Activation by AKT is independent of AKT serine/threonine-protein kinase activity. In terms of biological role, proton-activated proton channel that catalyzes proton efflux from endosomes and lysosomes to maintain a steady-state pH. Activated at low pH (under pH 4.6) by luminal side protons: selectively mediates lysosomal proton release from lysosomes, eliciting a proton leak that balances V-ATPase activity to maintain pH homeostasis. Regulation of lumenal pH stability is required for autophagosome-lysosome fusion. Also acts as a potassium channel at higher pH, regulating potassium conductance in endosomes and lysosomes. Constitutes the pore-forming subunit of the lysoK(GF) complex, a complex activated by extracellular growth factors. The lysoK(GF) complex is composed of TMEM175 and AKT (AKT1, AKT2 or AKT3), a major target of growth factor receptors: in the complex, TMEM175 channel is opened by conformational changes by AKT, leading to its activation. The lysoK(GF) complex is required to protect neurons against stress-induced damage. The polypeptide is Endosomal/lysosomal proton channel TMEM175 (Mus musculus (Mouse)).